A 492-amino-acid chain; its full sequence is Ketol-acid reductoisomerase (NADP(+)) (492 aa).

The KARI N-terminal Rossmann domain maps to 14–208 (LDQLGKCRFM…GGHRAGVLQS (195 aa)). NADP(+) is bound by residues 45–48 (CGAQ), Arg-68, Arg-76, Ser-78, and 108–110 (DKQ). His-132 is an active-site residue. Gly-158 lines the NADP(+) pocket. 2 consecutive KARI C-terminal knotted domains span residues 209-344 (SFVA…NAPQ) and 345-485 (FDGK…MKDM). The Mg(2+) site is built by Asp-217, Glu-221, Glu-389, and Glu-393. Ser-414 provides a ligand contact to substrate.

The protein belongs to the ketol-acid reductoisomerase family. Mg(2+) is required as a cofactor.

The catalysed reaction is (2R)-2,3-dihydroxy-3-methylbutanoate + NADP(+) = (2S)-2-acetolactate + NADPH + H(+). The enzyme catalyses (2R,3R)-2,3-dihydroxy-3-methylpentanoate + NADP(+) = (S)-2-ethyl-2-hydroxy-3-oxobutanoate + NADPH + H(+). It functions in the pathway amino-acid biosynthesis; L-isoleucine biosynthesis; L-isoleucine from 2-oxobutanoate: step 2/4. Its pathway is amino-acid biosynthesis; L-valine biosynthesis; L-valine from pyruvate: step 2/4. Its function is as follows. Involved in the biosynthesis of branched-chain amino acids (BCAA). Catalyzes an alkyl-migration followed by a ketol-acid reduction of (S)-2-acetolactate (S2AL) to yield (R)-2,3-dihydroxy-isovalerate. In the isomerase reaction, S2AL is rearranged via a Mg-dependent methyl migration to produce 3-hydroxy-3-methyl-2-ketobutyrate (HMKB). In the reductase reaction, this 2-ketoacid undergoes a metal-dependent reduction by NADPH to yield (R)-2,3-dihydroxy-isovalerate. This is Ketol-acid reductoisomerase (NADP(+)) from Pectobacterium atrosepticum (strain SCRI 1043 / ATCC BAA-672) (Erwinia carotovora subsp. atroseptica).